The chain runs to 288 residues: Elongation factor Ts (288 aa).

The interval T82–V85 is involved in Mg(2+) ion dislocation from EF-Tu.

It belongs to the EF-Ts family.

The protein localises to the cytoplasm. Functionally, associates with the EF-Tu.GDP complex and induces the exchange of GDP to GTP. It remains bound to the aminoacyl-tRNA.EF-Tu.GTP complex up to the GTP hydrolysis stage on the ribosome. The protein is Elongation factor Ts of Chlorobium chlorochromatii (strain CaD3).